Reading from the N-terminus, the 126-residue chain is Small ribosomal subunit protein uS12 (126 aa).

The interval 1–23 (MPTISQLVRKGRKTVASKSTAPA) is disordered. D89 is subject to 3-methylthioaspartic acid.

It belongs to the universal ribosomal protein uS12 family. As to quaternary structure, part of the 30S ribosomal subunit. Contacts proteins S8 and S17. May interact with IF1 in the 30S initiation complex.

Its function is as follows. With S4 and S5 plays an important role in translational accuracy. In terms of biological role, interacts with and stabilizes bases of the 16S rRNA that are involved in tRNA selection in the A site and with the mRNA backbone. Located at the interface of the 30S and 50S subunits, it traverses the body of the 30S subunit contacting proteins on the other side and probably holding the rRNA structure together. The combined cluster of proteins S8, S12 and S17 appears to hold together the shoulder and platform of the 30S subunit. This chain is Small ribosomal subunit protein uS12, found in Clostridium perfringens (strain ATCC 13124 / DSM 756 / JCM 1290 / NCIMB 6125 / NCTC 8237 / Type A).